The primary structure comprises 54 residues: Rubredoxin (54 aa).

One can recognise a Rubredoxin-like domain in the interval 1–54; that stretch reads MKKYQCIVCGWIYDEAEGWPQDGIAPGTKWEDIPDDWTCPDCGVSKVDFEMIEV. Fe cation is bound by residues Cys6, Cys9, Cys39, and Cys42.

The protein belongs to the rubredoxin family. Fe(3+) is required as a cofactor.

The protein localises to the cytoplasm. It functions in the pathway hydrocarbon metabolism; alkane degradation. In terms of biological role, involved in the hydrocarbon hydroxylating system, which transfers electrons from NADH to rubredoxin reductase and then through rubredoxin to alkane 1 monooxygenase. The polypeptide is Rubredoxin (rubA) (Acinetobacter baylyi (strain ATCC 33305 / BD413 / ADP1)).